We begin with the raw amino-acid sequence, 75 residues long: UPF0352 protein CKO_00587 (75 aa).

The protein belongs to the UPF0352 family.

This Citrobacter koseri (strain ATCC BAA-895 / CDC 4225-83 / SGSC4696) protein is UPF0352 protein CKO_00587.